Consider the following 506-residue polypeptide: 5'-3' exonuclease PLD4 (506 aa).

Residues 31–51 form a helical membrane-spanning segment; that stretch reads LQVLGALAVLWLGSVALICLL. An intrachain disulfide couples cysteine 94 to cysteine 250. Residues asparagine 150 and asparagine 171 are each glycosylated (N-linked (GlcNAc...) asparagine). A PLD phosphodiesterase 1 domain is found at 209-236; that stretch reads TRGVLHSKFWVVDGRHIYMGSANMDWRS. Catalysis depends on histidine 214, which acts as the Proton donor. Catalysis depends on residues lysine 216 and aspartate 221. N-linked (GlcNAc...) asparagine glycosylation is found at asparagine 249, asparagine 281, asparagine 403, asparagine 417, and asparagine 427. Cysteines 379 and 502 form a disulfide. Residues 423–449 enclose the PLD phosphodiesterase 2 domain; that stretch reads FSRVNHSKFMVTEKAAYIGTSNWSEDY. Histidine 428 acts as the Nucleophile in catalysis. Residue asparagine 444 is glycosylated (N-linked (GlcNAc...) asparagine).

The protein belongs to the phospholipase D family. Homodimer. In terms of processing, highly N-glycosylated. Expressed in plasmacytoid dendritic cells and monocytes (at protein level).

It localises to the endoplasmic reticulum membrane. It is found in the golgi apparatus. The protein resides in the trans-Golgi network membrane. Its subcellular location is the nucleus. The protein localises to the early endosome. It localises to the cytoplasmic vesicle. It is found in the phagosome. The protein resides in the lysosome. The enzyme catalyses Exonucleolytic cleavage in the 5'- to 3'-direction to yield nucleoside 3'-phosphates.. The catalysed reaction is a 5'-end 5'-dephospho-ribonucleotidyl-ribonucleotide-RNA + H2O = a ribonucleoside 3'-phosphate + a 5'-end dephospho-ribonucleoside-RNA + H(+). It carries out the reaction a ribonucleoside 3'-phosphate-2'-3'-cyclophospho-GMP + H2O = a ribonucleoside 3'-phosphate + 2',3'-cyclophospho-GMP + H(+). It catalyses the reaction a 5'-end 5'-dephospho-2'-deoxyribonucleotidyl-2'-deoxyribonucleotide in single-stranded DNA + H2O = a 5'-end dephospho-2'-deoxyribonucleoside in single-stranded DNA + a 2'-deoxyribonucleoside 3'-phosphate + H(+). The enzyme catalyses a 5'-end 5'-phospho-2'-deoxyribonucleotide in single-stranded DNA + H2O = a 5'-end 5'-dephospho-2'-deoxyribonucleotide in single-stranded DNA + phosphate. The catalysed reaction is a 3-lyso-sn-glycero-1-phospho-(3'-acyl-1'-sn-glycerol) + a 1-acyl-sn-glycerol = a 3-acyl-sn-glycero-1-phospho-(3'-acyl-1'-sn-glycerol) + glycerol. It carries out the reaction 3-lyso-sn-glycero-1-phospho-(3'-(9Z-octadecenoyl)-1'-sn-glycerol) + 1-(9Z-octadecenoyl)-sn-glycerol = 3-(9Z-octadecenoyl)-sn-glycero-1-phospho-(3'-(9Z-octadecenoyl)-1'-sn-glycerol) + glycerol. With respect to regulation, the exonuclease activity toward ssDNA substrate is Ca(2+) and Mg(2+)-independent, but it is inhibited by Fe(2+), Cu(2+) and to a lesser extent Zn(2+) ions. 5'-&gt;3' exonuclease that hydrolyzes the phosphodiester bond of single-stranded DNA (ssDNA) and RNA molecules to form nucleoside 3'-monophosphates and 5'-end 5'-hydroxy deoxyribonucleotide/ribonucleotide fragments. Partially redundant with PLD3, can cleave all four nucleotides displaying higher efficiency for ssDNA and RNA fragments initiated with uridine and guanosine residues and lower efficiency for cytidine-initiated substrates. As a result, it does not always degrade polynucleotides to the single nucleotide level, it can stall at specific sites sparing certain fragments from exonucleolytic degradation. Processes self and pathogenic ssDNA and RNA molecules that reach the endolysosomal compartment via phagocytosis or autophagy and may serve as 'danger' signals for recognition by innate immune receptors such as toll-like receptors (TLRs). Degrades mitochondrial CpG-rich ssDNA fragments to prevent TLR9 activation and autoinflammatory response, but it can cleave viral RNA to generate ligands for TLR7 activation and initiate antiviral immune responses. In plasmacytoid dendritic cells, it cooperates with endonuclease RNASET2 to release 2',3'-cyclic guanosine monophosphate (2',3'-cGMP), a potent stimulatory ligand for TLR7. Produces 2',3'-cGMPs and cytidine-rich RNA fragments that occupy TLR7 ligand-binding pockets and trigger a signaling-competent state. Can exert polynucleotide phosphatase activity toward 5'-phosphorylated ssDNA substrates although at a slow rate. Transphosphatidylase that catalyzes the exchange with R to S stereo-inversion of the glycerol moiety between (S,R)-lysophosphatidylglycerol (LPG) and monoacylglycerol (MAG) substrates to yield (S,S)-bis(monoacylglycero)phosphate (BMP). Can synthesize a variety of (S,S)-BMPs representing the main phospholipid constituent of lysosomal intralumenal vesicle (ILV) membranes that bind acid hydrolases for lipid degradation. Regulates the homeostasis and interorganellar communication of the endolysosomal system with an overall impact on cellular removal of dysfunctional organelles via autophagy as well as proper protein and lipid turnover. May play a role in myotube formation in response to ER stress. This Homo sapiens (Human) protein is 5'-3' exonuclease PLD4.